We begin with the raw amino-acid sequence, 99 residues long: CLAVATA3/ESR (CLE)-related protein 41 (99 aa).

An N-terminal signal peptide occupies residues 1-34; sequence MATSNDQTNTKSSHSRTLLLLFIFLSLLLFSSLT. The interval 60 to 99 is disordered; sequence ASSTMDLRPKASTRRSRTSRRREFGNDAHEVPSGPNPISN. Residues 70-79 are compositionally biased toward basic residues; the sequence is ASTRRSRTSR. Positions 80–89 are enriched in basic and acidic residues; that stretch reads RREFGNDAHE. Hydroxyproline occurs at positions 91 and 94. Pro-94 carries O-linked (Ara...) hydroxyproline glycosylation.

This sequence belongs to the CLV3/ESR signal peptide family. As to quaternary structure, CLE41p interacts specifically with the leucine-rich repeat receptor-like protein kinase TDR. In terms of processing, the O-glycosylation (arabinosylation) of the hydroxyproline Pro-94 enhances binding affinity of the CLE41p peptide for its receptor. Mostly expressed in inflorescence and roots, and, to a lower extent, in seedlings, flowers, leaves and siliques. Observed along the vascular strands in cotyledons, leaves and roots, but not in shoot apical meristems (SAM). Restricted to the phloem and the neighboring pericycle cells in the roots and hypocotyls.

It is found in the secreted. The protein localises to the extracellular space. Its function is as follows. Extracellular signal peptide that regulates cell fate. May act with TDR as a ligand-receptor pair in a signal transduction pathway that represses tracheary element differentiation but promotes the formation of procambial cells adjacent to phloem cells in the veins in an auxin-dependent manner. Regulates the transition of protophloem cells from proliferation to differentiation, thus impinging on postembryonic growth capacity of the root meristem; this signaling pathway requires CRN and CLV2. The sequence is that of CLAVATA3/ESR (CLE)-related protein 41 from Arabidopsis thaliana (Mouse-ear cress).